The primary structure comprises 857 residues: Phosphoenolpyruvate carboxylase (857 aa).

Catalysis depends on residues H144 and K530.

The protein belongs to the PEPCase type 1 family. As to quaternary structure, homotetramer. Mg(2+) is required as a cofactor. In terms of processing, the N-terminus is blocked.

The catalysed reaction is oxaloacetate + phosphate = phosphoenolpyruvate + hydrogencarbonate. Forms oxaloacetate, a four-carbon dicarboxylic acid source for the tricarboxylic acid cycle. This is Phosphoenolpyruvate carboxylase (ppc) from Thermus sp. (strain 71).